The following is a 334-amino-acid chain: Leucine-rich repeat-containing protein 39 (334 aa).

LRR repeat units follow at residues 59 to 82 (EDGR…LLKL), 83 to 105 (NQLQ…IGRF), 106 to 128 (QHLI…IGLL), 129 to 151 (TRLQ…LSNC), 153 to 175 (SLEK…LSKL), 176 to 198 (LKLT…VLDM), 199 to 221 (PALE…LDRM), 223 to 244 (SLHT…IRNM), 245 to 269 (KNLG…EMTS), and 272 to 295 (FVNF…VDGE).

In terms of assembly, interacts with MYH7 (via C-terminus). In terms of tissue distribution, expressed in heart and skeletal muscle (at protein level). Also detected in kidney (at protein level). Not detected in other tissues tested (at protein level).

The protein resides in the cytoplasm. It localises to the myofibril. Its subcellular location is the sarcomere. It is found in the m line. In terms of biological role, component of the sarcomeric M-band which plays a role in myocyte response to biomechanical stress. May regulate expression of other M-band proteins via an SRF-dependent pathway. Important for normal contractile function in heart. The polypeptide is Leucine-rich repeat-containing protein 39 (Rattus norvegicus (Rat)).